Consider the following 297-residue polypeptide: MAAPQLFRALVSAQWVAEALKAPRSSQPLKLLDASWYLPKLGRDARREFEERHIPGAAFFDIDRCSDHTSPYDHMLPNATHFADYAGSLGVSAATHVVIYDDSDQGLYSAPRVWWMFRAFGHHSVSLLDGGFRHWLNQNLPISSGKSHSEPAEFSAQLDPSFIKTHEDILENLDARRFQVVDARAAGRFQGTQPEPRDGIEPGHIPGSVNIPFTEFLTNEGLEKSPEEIKRLFKEKKVDLSKPLVATCGSGVTACHVVLGAFLCGKSDVPVYDGSWVEWYMRAQPEHIISEGRGKTQ.

Ala-2 carries the N-acetylalanine modification. Positions 25-144 (SSQPLKLLDA…WLNQNLPISS (120 aa)) constitute a Rhodanese 1 domain. Ser-35 carries the phosphoserine modification. Residue Lys-40 is modified to N6-acetyllysine; alternate. Lys-40 carries the post-translational modification N6-succinyllysine; alternate. The hinge stretch occupies residues 145-160 (GKSHSEPAEFSAQLDP). 2 positions are modified to N6-succinyllysine: Lys-146 and Lys-164. The region spanning 174–288 (DARRFQVVDA…WYMRAQPEHI (115 aa)) is the Rhodanese 2 domain. Arg-188 contributes to the substrate binding site. Cys-248 acts as the Cysteine persulfide intermediate in catalysis.

Monomer (active form). Homodimer; disulfide-linked (inactive form). As to expression, expressed in the brain and retina. In the retina, localized to the inner and outer plexiform layer, the inner and outer nuclear layer and the outer segments of photoreceptors. In the brain, localized to neurons of mitral cell layers, glomerular, and external plexiform layers in the olfactory bulb. Also found in Purkinje cell stomata and proximal dendrites. In the spinal cord, localized to large neurons. In the cerebral cortex, localized to pyramidial neurons in layers II/III and V, and in layers I-VI of neocortical areas. In the hippocampus, found in CA1 and CA3 pyramidal cells.

Its subcellular location is the cytoplasm. It is found in the mitochondrion. The protein localises to the synapse. It localises to the synaptosome. The enzyme catalyses 2-oxo-3-sulfanylpropanoate + [thioredoxin]-dithiol = [thioredoxin]-disulfide + hydrogen sulfide + pyruvate + H(+). Its activity is regulated as follows. By oxidative stress, and thioredoxin. Under oxidative stress conditions, the catalytic cysteine site is converted to a sulfenate which inhibits the MPST enzyme activity. Reduced thioredoxin cleaves an intersubunit disulfide bond to turn on the redox switch and reactivate the enzyme. Inhibited by different oxidants, hydrogen peroxide and tetrathionate. Its function is as follows. Transfer of a sulfur ion to cyanide or to other thiol compounds. Also has weak rhodanese activity. Detoxifies cyanide and is required for thiosulfate biosynthesis. Acts as an antioxidant. In combination with cysteine aminotransferase (CAT), contributes to the catabolism of cysteine and is an important producer of hydrogen sulfide in the brain, retina and vascular endothelial cells. Hydrogen sulfide H(2)S is an important synaptic modulator, signaling molecule, smooth muscle contractor and neuroprotectant. Its production by the 3MST/CAT pathway is regulated by calcium ions. This Mus musculus (Mouse) protein is 3-mercaptopyruvate sulfurtransferase (Mpst).